The chain runs to 199 residues: Transgelin-3 (199 aa).

A Calponin-homology (CH) domain is found at Ala24–Ala136. The residue at position 163 (Ser163) is a Phosphoserine. The Calponin-like repeat unit spans residues Ile174 to Met199. Residues Met178–Gly188 are compositionally biased toward polar residues. A disordered region spans residues Met178 to Met199.

Belongs to the calponin family. In terms of tissue distribution, abundant and ubiquitous expression in neurons.

This chain is Transgelin-3 (Tagln3), found in Rattus norvegicus (Rat).